A 167-amino-acid chain; its full sequence is uncharacterized protein (167 aa).

This is an uncharacterized protein from Pasteurella multocida (strain Pm70).